A 103-amino-acid chain; its full sequence is Leukocyte cysteine proteinase inhibitor 1 (103 aa).

Met-1 is subject to Blocked amino end (Met); partial. The tract at residues 1–20 is disordered; it reads MESEEMLAGGLTEPRPATPE. The short motif at 51–55 is the Secondary area of contact element; the sequence is QVVAG.

It belongs to the cystatin family.

Its subcellular location is the cytoplasm. In terms of biological role, potent inhibitor of cathepsins L and S, and papain. This chain is Leukocyte cysteine proteinase inhibitor 1, found in Sus scrofa (Pig).